The primary structure comprises 375 residues: Glutamate 5-kinase (375 aa).

An ATP-binding site is contributed by lysine 13. Substrate-binding residues include serine 54, aspartate 141, and asparagine 153. ATP is bound by residues 173–174 (TD) and 216–222 (TGGMATK). The PUA domain maps to 281-359 (TGKIFIDAGA…EAIAAVLGYV (79 aa)).

Belongs to the glutamate 5-kinase family.

Its subcellular location is the cytoplasm. The enzyme catalyses L-glutamate + ATP = L-glutamyl 5-phosphate + ADP. The protein operates within amino-acid biosynthesis; L-proline biosynthesis; L-glutamate 5-semialdehyde from L-glutamate: step 1/2. Catalyzes the transfer of a phosphate group to glutamate to form L-glutamate 5-phosphate. The sequence is that of Glutamate 5-kinase from Synechocystis sp. (strain ATCC 27184 / PCC 6803 / Kazusa).